Consider the following 244-residue polypeptide: Methylthioribulose-1-phosphate dehydratase (244 aa).

Residue Cys-104 coordinates substrate. Zn(2+) contacts are provided by His-122 and His-124. Glu-148 functions as the Proton donor/acceptor in the catalytic mechanism. His-204 contacts Zn(2+).

Belongs to the aldolase class II family. MtnB subfamily. It depends on Zn(2+) as a cofactor.

The protein localises to the cytoplasm. It carries out the reaction 5-(methylsulfanyl)-D-ribulose 1-phosphate = 5-methylsulfanyl-2,3-dioxopentyl phosphate + H2O. The protein operates within amino-acid biosynthesis; L-methionine biosynthesis via salvage pathway; L-methionine from S-methyl-5-thio-alpha-D-ribose 1-phosphate: step 2/6. Its function is as follows. Catalyzes the dehydration of methylthioribulose-1-phosphate (MTRu-1-P) into 2,3-diketo-5-methylthiopentyl-1-phosphate (DK-MTP-1-P). This Cryptococcus neoformans var. neoformans serotype D (strain B-3501A) (Filobasidiella neoformans) protein is Methylthioribulose-1-phosphate dehydratase.